A 236-amino-acid chain; its full sequence is Virion protein US10 homolog (236 aa).

The interval Met1 to Asp32 is disordered. The segment covering Ser21–Ala31 has biased composition (gly residues). Residues Cys138–Cys150 fold into a zinc finger.

The protein belongs to the herpesviridae US10 family. In terms of processing, phosphorylated.

It localises to the virion tegument. It is found in the host nucleus matrix. This is Virion protein US10 homolog (IR5) from Equine herpesvirus 1 (strain Kentucky A) (EHV-1).